The chain runs to 444 residues: Serine carboxypeptidase 2 (444 aa).

Residue 60–62 (NGG) coordinates substrate. Disulfide bonds link Cys65–Cys324, Cys222–Cys234, and Cys258–Cys291. 2 N-linked (GlcNAc...) asparagine glycosylation sites follow: Asn116 and Asn127. 157–159 (ESY) is a substrate binding site. Ser158 is a catalytic residue. A glycan (N-linked (GlcNAc...) asparagine) is linked at Asn259. A propeptide spans 260–286 (ITSSSSSSSSSLSQQRRSRGRYPWLTG) (linker peptide). 2 N-linked (GlcNAc...) asparagine glycosylation sites follow: Asn312 and Asn318. Residues Asp361 and His413 contribute to the active site. Position 409–413 (409–413 (RGAGH)) interacts with substrate.

The protein belongs to the peptidase S10 family. As to quaternary structure, carboxypeptidase II is a dimer, where each monomer is composed of two chains linked by a disulfide bond. N-glycosylated.

The catalysed reaction is Preferential release of a C-terminal arginine or lysine residue.. The protein is Serine carboxypeptidase 2 (CBP2) of Triticum aestivum (Wheat).